Here is a 202-residue protein sequence, read N- to C-terminus: Secreted RxLR effector protein 11 (202 aa).

The N-terminal stretch at 1–23 (MRLNFTKLFAGAVALAWTTESMA) is a signal peptide. The RxLR-dEER motif lies at 49 to 61 (RRLRTINGADEER).

This sequence belongs to the RxLR effector family.

It is found in the secreted. It localises to the host cytoplasm. The protein localises to the host nucleus. Its function is as follows. Effector that acts as a broad suppressor of cell death to interrupt plant immunity. Inhibits cell death induced by cell death-inducing proteins, including the PAMP elicitor INF1 from P.infestans. This Plasmopara viticola (Downy mildew of grapevine) protein is Secreted RxLR effector protein 11.